A 197-amino-acid chain; its full sequence is Large ribosomal subunit protein bL17 (197 aa).

Residues 120 to 197 (DVPPADTGQG…EEEESEEDNT (78 aa)) are disordered. Positions 127–136 (GQGGSGGTRR) are enriched in gly residues. The segment covering 159–197 (SSDEESESVEEDEATAEEASADAEQGEAEEEEESEEDNT) has biased composition (acidic residues).

This sequence belongs to the bacterial ribosomal protein bL17 family. Part of the 50S ribosomal subunit. Contacts protein L32.

The sequence is that of Large ribosomal subunit protein bL17 from Salinibacter ruber (strain DSM 13855 / M31).